The primary structure comprises 200 residues: Riboflavin kinase (200 aa).

A disordered region spans residues 1–20; that stretch reads MATARPSIVGPDSGPESPFP. The Mg(2+) site is built by T42 and N44. The active-site Nucleophile is the E110.

This sequence belongs to the flavokinase family. It depends on Zn(2+) as a cofactor. The cofactor is Mg(2+).

The enzyme catalyses riboflavin + ATP = FMN + ADP + H(+). The protein operates within cofactor biosynthesis; FMN biosynthesis; FMN from riboflavin (ATP route): step 1/1. Catalyzes the phosphorylation of riboflavin (vitamin B2) to form flavin mononucleotide (FMN) coenzyme. The polypeptide is Riboflavin kinase (FMN1) (Pyricularia oryzae (strain 70-15 / ATCC MYA-4617 / FGSC 8958) (Rice blast fungus)).